Consider the following 213-residue polypeptide: MTDFRQDFLKFSLAQNVLKFGEFTTKAGRRSPYFFNAGLFNDGASTLQLAKFYAQSIIESGIRFDMLFGPAYKGIILAAATAMMLAEKGVNVPFAYNRKEAKDHGEGGVLVGAPLKGRVLIIDDVISAGTSVRESIKLIEAEGATPAGVAIALDRMEKGTGELSAVQEVEKQYGLPVAPIASLNDLFILLQNNPEFGQFLEPVRAYRRQYGVE.

Lysine 26 serves as a coordination point for 5-phospho-alpha-D-ribose 1-diphosphate. 34–35 (FF) serves as a coordination point for orotate. 5-phospho-alpha-D-ribose 1-diphosphate contacts are provided by residues 72 to 73 (YK), arginine 98, lysine 99, lysine 102, histidine 104, and 123 to 131 (DDVISAGTS). Residues serine 127 and arginine 155 each contribute to the orotate site.

The protein belongs to the purine/pyrimidine phosphoribosyltransferase family. PyrE subfamily. Homodimer. Mg(2+) is required as a cofactor.

The catalysed reaction is orotidine 5'-phosphate + diphosphate = orotate + 5-phospho-alpha-D-ribose 1-diphosphate. It functions in the pathway pyrimidine metabolism; UMP biosynthesis via de novo pathway; UMP from orotate: step 1/2. Functionally, catalyzes the transfer of a ribosyl phosphate group from 5-phosphoribose 1-diphosphate to orotate, leading to the formation of orotidine monophosphate (OMP). The sequence is that of Orotate phosphoribosyltransferase from Neisseria meningitidis serogroup C (strain 053442).